The chain runs to 565 residues: Ubiquitin carboxyl-terminal hydrolase 39 (565 aa).

2 stretches are compositionally biased toward basic and acidic residues: residues M1–S21 and V28–E39. Disordered stretches follow at residues M1–E61 and E75–V95. Residue S46 is modified to Phosphoserine. K51 is covalently cross-linked (Glycyl lysine isopeptide (Lys-Gly) (interchain with G-Cter in SUMO2)). S82 carries the post-translational modification Phosphoserine. Residues E85–V95 are compositionally biased toward basic and acidic residues. The UBP-type; degenerate zinc-finger motif lies at R103–Q200. Positions 136, 139, 155, and 161 each coordinate Zn(2+). The USP domain maps to V225–R555.

It belongs to the peptidase C19 family. In terms of assembly, the U4/U6-U5 tri-snRNP complex is a building block of the precatalytic spliceosome (spliceosome B complex). Component of the U4/U6-U5 tri-snRNP complex composed of the U4, U6 and U5 snRNAs and at least PRPF3, PRPF4, PRPF6, PRPF8, PRPF31, SNRNP200, TXNL4A, SNRNP40, SNRPB, SNRPD1, SNRPD2, SNRPD3, SNRPE, SNRPF, SNRPG, DDX23, CD2BP2, PPIH, SNU13, EFTUD2, SART1 and USP39, plus LSM2, LSM3, LSM4, LSM5, LSM6, LSM7 and LSM8.

The protein resides in the nucleus. The enzyme catalyses Thiol-dependent hydrolysis of ester, thioester, amide, peptide and isopeptide bonds formed by the C-terminal Gly of ubiquitin (a 76-residue protein attached to proteins as an intracellular targeting signal).. Deubiquitinating enzyme that plays a role in many cellular processes including cellular antiviral response, epithelial morphogenesis, DNA repair or B-cell development. Plays a role in pre-mRNA splicing as a component of the U4/U6-U5 tri-snRNP, one of the building blocks of the precatalytic spliceosome. Specifically regulates immunoglobulin gene rearrangement in a spliceosome-dependent manner, which involves modulating chromatin interactions at the Igh locus and therefore plays an essential role in B-cell development. Regulates AURKB mRNA levels, and thereby plays a role in cytokinesis and in the spindle checkpoint. Regulates apoptosis and G2/M cell cycle checkpoint in response to DNA damage by deubiquitinating and stabilizing CHK2. Also plays an important role in DNA repair by controlling the recruitment of XRCC4/LIG4 to DNA double-strand breaks for non-homologous end-joining repair. Participates in antiviral activity by affecting the type I IFN signaling by stabilizing STAT1 and decreasing its 'Lys-6'-linked ubiquitination. Contributes to non-canonical Wnt signaling during epidermal differentiation. Acts as a negative regulator NF-kappa-B activation through deubiquitination of 'Lys-48'-linked ubiquitination of NFKBIA. In Homo sapiens (Human), this protein is Ubiquitin carboxyl-terminal hydrolase 39.